We begin with the raw amino-acid sequence, 490 residues long: Transcription factor lin-26 (490 aa).

Disordered regions lie at residues Lys96–Gln176, Thr236–Ser262, and Ala302–Arg326. Positions Ser101–Thr110 are PEST. Low complexity predominate over residues Ser101 to Pro120. Composition is skewed to polar residues over residues Ala123–Thr132 and Asn151–Gln176. A compositionally biased stretch (basic and acidic residues) spans Thr236–Pro260. The C2H2-type; degenerate zinc finger occupies Tyr353–His381.

As to expression, expressed in somatic gonads and germline precursors until the 50-cell stage. After the 100-cell stage, expression is seen in differentiating hypodermal and support cells (at protein level).

It is found in the nucleus. Functionally, probable transcription factor. Required to specify the fates of hypodermal and neuron-associated support cells. Functions during vulval development, playing a role in vulval precursor cell fate specification. Positively modulates expression of homeobox protein lin-39, perhaps by binding to regulatory regions of the lin-39 gene, acting in the vulval lineage. The protein is Transcription factor lin-26 of Caenorhabditis elegans.